A 493-amino-acid polypeptide reads, in one-letter code: Cobyric acid synthase (493 aa).

One can recognise a GATase cobBQ-type domain in the interval 252 to 443; that stretch reads DLQITVVRLP…LHGLFDNGPW (192 aa). Cys333 serves as the catalytic Nucleophile. His435 is a catalytic residue.

The protein belongs to the CobB/CobQ family. CobQ subfamily.

It participates in cofactor biosynthesis; adenosylcobalamin biosynthesis. Functionally, catalyzes amidations at positions B, D, E, and G on adenosylcobyrinic A,C-diamide. NH(2) groups are provided by glutamine, and one molecule of ATP is hydrogenolyzed for each amidation. The sequence is that of Cobyric acid synthase from Nostoc sp. (strain PCC 7120 / SAG 25.82 / UTEX 2576).